The sequence spans 47 residues: Snake venom metalloproteinase jararafibrase-4 (47 aa).

Residues 6 to 47 (RYIELFLVVDHGMFMKYNGNSDKIYYYIHQMVNIMKXAYXYL) enclose the Peptidase M12B domain. A Ca(2+)-binding site is contributed by glutamate 9.

This sequence belongs to the venom metalloproteinase (M12B) family. In terms of assembly, monomer. Zn(2+) serves as cofactor. As to expression, expressed by the venom gland.

The protein resides in the secreted. With respect to regulation, inhibited by 1,10-phenanthroline and EDTA. Its function is as follows. The metalloproteinase is a probable venom zinc protease that induces local hemorrhage in the skin of rats. Degrades type-IV collagen, gelatin, laminin and fibronectin. Has fibrinolytic activities. Has high hemagglutinating activity on red blood cells. Cleaves insulin B chain at 29-His-|-Leu-30, and 38-Ala-|-Leu-39 bonds. This Bothrops jararaca (Jararaca) protein is Snake venom metalloproteinase jararafibrase-4.